Consider the following 329-residue polypeptide: NADH-quinone oxidoreductase subunit H (329 aa).

The next 9 membrane-spanning stretches (helical) occupy residues 9–29 (LIKI…ATYI), 42–62 (GPSY…IKLF), 75–95 (LIFT…MAPI), 117–137 (IGFL…ILAG), 154–174 (IQLL…LMVV), 188–208 (GGFL…FLIA), 238–258 (LKWG…SFVI), 269–291 (WGFI…LSMW), and 309–329 (WKIM…IILI).

Belongs to the complex I subunit 1 family. As to quaternary structure, NDH-1 is composed of 14 different subunits. Subunits NuoA, H, J, K, L, M, N constitute the membrane sector of the complex.

The protein resides in the cell inner membrane. The enzyme catalyses a quinone + NADH + 5 H(+)(in) = a quinol + NAD(+) + 4 H(+)(out). NDH-1 shuttles electrons from NADH, via FMN and iron-sulfur (Fe-S) centers, to quinones in the respiratory chain. The immediate electron acceptor for the enzyme in this species is believed to be ubiquinone. Couples the redox reaction to proton translocation (for every two electrons transferred, four hydrogen ions are translocated across the cytoplasmic membrane), and thus conserves the redox energy in a proton gradient. This subunit may bind ubiquinone. This is NADH-quinone oxidoreductase subunit H from Helicobacter acinonychis (strain Sheeba).